The primary structure comprises 1523 residues: WD repeat-containing protein 62 (1523 aa).

An N-acetylalanine modification is found at A2. S33 is subject to Phosphoserine. Position 46 is a phosphothreonine (T46). WD repeat units lie at residues 109–150 (TTRK…QVAE), 153–194 (GHKY…VVAS), 196–234 (KVSCRVIALSFSEDSSYFVTVGNRHVRFWFLEASTEAKV), 291–330 (INLKVSLSSCLCVSDELIFCGCTDGIVRIFQAHSLLYLTN), 357–396 (AVYPDTVALTFDPVHQWLSCVYKDHSIYIWDVKDIDEVSK), 411–450 (EVYPEFEDQRACLPSGTFLTCSSDNTIRFWNLDSASDTRW), 490–529 (DMKAGVRVMQVSPDGQHLASGDRSGNLRIHELHFMDELIK), 532–574 (AHDA…NLEQ), 578–618 (DHSS…DGLH), 626–665 (AEKTTLYDMDIDITQKYVAVACQDRNVRVYNTVSGKQKKC), 671–713 (GDEG…KMFG), and 714–752 (HSEIVTGMKFTYDCRHLITVSGDSCVFIWHLGPEITTCM). S501 bears the Phosphoserine mark. Positions 762–824 (QEQQQQPKDQ…PSKDSLDPDP (63 aa)) are disordered. Residues 776–790 (PPSQETYASTPSEIR) are compositionally biased toward polar residues. Residues 797-809 (QTEDEMEEECEPE) are compositionally biased toward acidic residues. Residues 803-846 (EEECEPEELLKTPSKDSLDPDPRCLLTNGKLPLWAKRLLGDDDV) form a WD 13 repeat. Over residues 810–824 (ELLKTPSKDSLDPDP) the composition is skewed to basic and acidic residues. Phosphoserine is present on residues S966 and S972. The disordered stretch occupies residues 1000–1072 (VSSVSSKDQS…GLGNGSLPQT (73 aa)). The residue at position 1072 (T1072) is a Phosphothreonine. Phosphoserine is present on residues S1117, S1143, and S1169. Positions 1143–1258 (SPEAQPVGQG…SLHKPLSPGQ (116 aa)) are disordered. 2 stretches are compositionally biased toward polar residues: residues 1167–1177 (YMSSDGTNVLS) and 1199–1213 (TSVLTTGREQSISAP). The segment covering 1214 to 1225 (SSCSYLESTTSS) has biased composition (low complexity). A compositionally biased stretch (polar residues) spans 1226-1235 (HAKTTRSISL). S1234 is subject to Phosphoserine.

In terms of assembly, can form homodimers (via C-terminus). Interacts (via C-terminus) with MAPKBP1 (via C-terminus). Interacts with CDK5RAP2, CEP152, CEP63 and KIAA0753. CEP63, CDK5RAP2, CEP152, WDR62 are proposed to form a stepwise assembled complex at the centrosome forming a ring near parental centrioles. Prominent in neural crest lineages from 9.5 dpc to 11.5 dpc. Also expressed in the ventricular and subventricular zones during the period of cerebral cortical neurogenesis (11.5-16.5 dpc), with expression decreasing in intensity by 17.5 dpc. In the cerebellum, it is strongly expressed in precursors of granule neurons at late embryonic and early postnatal stages; by postnatal day 9 (P9). Present in fetal brain, enriched within the ventricular and subventricular zone (at protein level).

The protein resides in the nucleus. The protein localises to the cytoplasm. It is found in the cytoskeleton. Its subcellular location is the spindle pole. It localises to the microtubule organizing center. The protein resides in the centrosome. The protein localises to the centriole. Its function is as follows. Required for cerebral cortical development. Plays a role in neuronal proliferation and migration. Plays a role in mother-centriole-dependent centriole duplication; the function seems also to involve CEP152, CDK5RAP2 and CEP63 through a stepwise assembled complex at the centrosome that recruits CDK2 required for centriole duplication. This chain is WD repeat-containing protein 62 (Wdr62), found in Mus musculus (Mouse).